A 179-amino-acid chain; its full sequence is Large ribosomal subunit protein uL5 (179 aa).

It belongs to the universal ribosomal protein uL5 family. As to quaternary structure, part of the 50S ribosomal subunit; part of the 5S rRNA/L5/L18/L25 subcomplex. Contacts the 5S rRNA and the P site tRNA. Forms a bridge to the 30S subunit in the 70S ribosome.

Its function is as follows. This is one of the proteins that bind and probably mediate the attachment of the 5S RNA into the large ribosomal subunit, where it forms part of the central protuberance. In the 70S ribosome it contacts protein S13 of the 30S subunit (bridge B1b), connecting the 2 subunits; this bridge is implicated in subunit movement. Contacts the P site tRNA; the 5S rRNA and some of its associated proteins might help stabilize positioning of ribosome-bound tRNAs. The chain is Large ribosomal subunit protein uL5 from Pseudomonas entomophila (strain L48).